Here is a 382-residue protein sequence, read N- to C-terminus: Succinyl-diaminopimelate desuccinylase (382 aa).

Zn(2+) is bound at residue His70. Asp72 is an active-site residue. Asp103 contributes to the Zn(2+) binding site. The active-site Proton acceptor is Glu137. Zn(2+) contacts are provided by Glu138, Glu166, and His355.

This sequence belongs to the peptidase M20A family. DapE subfamily. In terms of assembly, homodimer. Zn(2+) serves as cofactor. It depends on Co(2+) as a cofactor.

The catalysed reaction is N-succinyl-(2S,6S)-2,6-diaminopimelate + H2O = (2S,6S)-2,6-diaminopimelate + succinate. Its pathway is amino-acid biosynthesis; L-lysine biosynthesis via DAP pathway; LL-2,6-diaminopimelate from (S)-tetrahydrodipicolinate (succinylase route): step 3/3. Catalyzes the hydrolysis of N-succinyl-L,L-diaminopimelic acid (SDAP), forming succinate and LL-2,6-diaminopimelate (DAP), an intermediate involved in the bacterial biosynthesis of lysine and meso-diaminopimelic acid, an essential component of bacterial cell walls. This Paracoccus denitrificans (strain Pd 1222) protein is Succinyl-diaminopimelate desuccinylase.